Consider the following 614-residue polypeptide: Leucine-rich repeat and immunoglobulin-like domain-containing nogo receptor-interacting protein 1 (614 aa).

Residues 1–35 (MLAGGVRSMPSPLLACWQPILLLVLGSVLSGSATG) form the signal peptide. 2 disulfide bridges follow: Cys-36–Cys-42 and Cys-40–Cys-51. In terms of domain architecture, LRRNT spans 36 to 65 (CPPRCECSAQDRAVLCHRKRFVAVPEGIPT). Residues 36-555 (CPPRCECSAQ…FDIKTLIIAT (520 aa)) lie on the Extracellular side of the membrane. 11 LRR repeats span residues 66–87 (ETRL…EFAS), 90–111 (HLEE…AFNN), 114–135 (NLRT…VFTG), 138–159 (NLTK…MFQD), 162–183 (NLKS…AFSG), 186–207 (SLEQ…ALSH), 210–231 (GLIV…SFKR), 258–279 (NLTS…AVRH), 282–303 (YLRF…MLHE), 306–327 (RLQE…AFRG), and 330–351 (YLRV…VFHS). Residue Asn-138 is glycosylated (N-linked (GlcNAc...) asparagine). Residue Asn-196 is glycosylated (N-linked (GlcNAc...) asparagine). 3 N-linked (GlcNAc...) asparagine glycosylation sites follow: Asn-258, Asn-268, and Asn-287. N-linked (GlcNAc...) asparagine glycosylation is present at Asn-335. Positions 363-417 (NPLACDCRLLWVFRRRWRLNFNRQQPTCATPEFVQGKEFKDFPDVLLPNYFTCRR) constitute an LRRCT domain. Cystine bridges form between Cys-367/Cys-390, Cys-369/Cys-415, and Cys-440/Cys-491. Residues 405-507 (PDVLLPNYFT…GNDSMPAHLH (103 aa)) form the Ig-like C2-type domain. N-linked (GlcNAc...) asparagine glycans are attached at residues Asn-486 and Asn-536. The chain crosses the membrane as a helical span at residues 556-576 (TMGFISFLGVVLFCLVLLFLW). Residues 577 to 614 (SRGKGNTKHNIEIEYVPRKSDAGISSADAPRKFNMKMI) lie on the Cytoplasmic side of the membrane. Ser-596 bears the Phosphoserine mark.

As to quaternary structure, homotetramer. Forms a ternary complex with RTN4R/NGFR and RTN4R/TNFRSF19. Interacts with NGRF, RTN4R and MYT1L. In terms of processing, N-glycosylated. Contains predominantly high-mannose glycans.

Its subcellular location is the cell membrane. Its function is as follows. Functional component of the Nogo receptor signaling complex (RTN4R/NGFR) in RhoA activation responsible for some inhibition of axonal regeneration by myelin-associated factors. Is also an important negative regulator of oligodentrocyte differentiation and axonal myelination. Acts in conjunction with RTN4 and RTN4R in regulating neuronal precursor cell motility during cortical development. This Macaca fascicularis (Crab-eating macaque) protein is Leucine-rich repeat and immunoglobulin-like domain-containing nogo receptor-interacting protein 1 (LINGO1).